We begin with the raw amino-acid sequence, 259 residues long: Probable metal transport system ATP-binding protein CT_068 (259 aa).

Residues 9-241 (WSVEDLCVNY…AIFQAYGCEL (233 aa)) enclose the ABC transporter domain. 41–48 (GPNGAGKS) serves as a coordination point for ATP.

Belongs to the ABC transporter superfamily.

The protein resides in the cell inner membrane. Its function is as follows. Part of an ATP-driven transport system CT_067/CT_068/CT_069/CT_070 for a metal. Probably responsible for energy coupling to the transport system. The protein is Probable metal transport system ATP-binding protein CT_068 of Chlamydia trachomatis serovar D (strain ATCC VR-885 / DSM 19411 / UW-3/Cx).